Consider the following 704-residue polypeptide: Protein polyglycylase TTLL10 (704 aa).

Disordered stretches follow at residues 1–32 (MALHPQAGRPHRDGSEAQAEAAAQDLGRLPSP), 46–125 (GHRA…SVKE), and 137–170 (DADDLEEEEAARLPVTSPDGLLMEGDKQPSPGQG). Basic residues predominate over residues 93-105 (VSSKRSKRSRIHP). Residues 114 to 125 (THEKQMGSSVKE) are compositionally biased toward basic and acidic residues. The TTL domain maps to 169-540 (QGPFFYIGGT…TCQKSLHSQK (372 aa)). Residues lysine 301, 307-308 (QG), 350-353 (QRYV), 363-365 (KFD), and 406-407 (TN) contribute to the ATP site. Glutamine 307 is an a protein binding site. Positions 486, 499, and 501 each coordinate Mg(2+). Residues 565-704 (LASSRPLNRL…EQRSTSHRGS (140 aa)) are disordered. Composition is skewed to pro residues over residues 576-588 (NPNPNPNPNANPH) and 596-612 (HPHPNPHPNANPHPPRP). Low complexity-rich tracts occupy residues 616-629 (AASSALSSARAAIS) and 654-667 (SDSSGSSIAESEPS).

Requires Mg(2+) as cofactor. Highly expressed in testis. Expressed in brain, heart, kidney, liver, lung, muscle and trachea.

The protein localises to the cytoplasm. It is found in the cytoskeleton. The protein resides in the cell projection. It localises to the cilium. Its subcellular location is the cilium axoneme. The enzyme catalyses (glycyl)(n)-glycyl-L-glutamyl-[protein] + glycine + ATP = (glycyl)(n+1)-glycyl-L-glutamyl-[protein] + ADP + phosphate + H(+). Polyglycylase which modifies both tubulin and non-tubulin proteins, generating polyglycine side chains of variable lengths on the gamma-carboxyl groups of specific glutamate residues of target proteins. Involved in the elongation step rather than the initiation step of the polyglycylation reaction. Polyglycylates alpha-tubulin and beta-tubulin. Polyglycylates non-tubulin proteins such as nucleosome assembly protein NAP1. This is Protein polyglycylase TTLL10 from Mus musculus (Mouse).